We begin with the raw amino-acid sequence, 154 residues long: Large ribosomal subunit protein uL13 (154 aa).

The protein belongs to the universal ribosomal protein uL13 family. In terms of assembly, part of the 50S ribosomal subunit.

Functionally, this protein is one of the early assembly proteins of the 50S ribosomal subunit, although it is not seen to bind rRNA by itself. It is important during the early stages of 50S assembly. This Cereibacter sphaeroides (strain ATCC 17029 / ATH 2.4.9) (Rhodobacter sphaeroides) protein is Large ribosomal subunit protein uL13.